A 335-amino-acid chain; its full sequence is Protein-arginine N-acetylglucosaminyltransferase SseK3 (335 aa).

Residues 51 to 53 (QWF) and Tyr-75 each bind UDP-N-acetyl-alpha-D-glucosamine. 2 N-beta-linked (GlcNAc) arginine; by autocatalysis glycosylation sites follow: Arg-153 and Arg-184. 224–227 (YLDA) lines the UDP-N-acetyl-alpha-D-glucosamine pocket. The short motif at 226-228 (DAD) is the DXD motif element. Residue Asp-228 coordinates Mn(2+). Catalysis depends on Glu-258, which acts as the Proton acceptor. Arg-305 carries an N-beta-linked (GlcNAc) arginine; by autocatalysis glycan. Asp-325 and Ser-327 together coordinate Mn(2+). UDP-N-acetyl-alpha-D-glucosamine contacts are provided by residues Ser-327 and 332 to 335 (SSWR). Residue Arg-335 is glycosylated (N-beta-linked (GlcNAc) arginine; by autocatalysis).

It belongs to the glycosyltransferase NleB family. In terms of assembly, interacts with host TRIM32; without mediating its GlcNAcylation. Mn(2+) serves as cofactor. Post-translationally, auto-glycosylated: arginine GlcNAcylation is required for activity toward death domain-containing host target proteins.

The protein resides in the secreted. It is found in the host Golgi apparatus. It carries out the reaction L-arginyl-[protein] + UDP-N-acetyl-alpha-D-glucosamine = N(omega)-(N-acetyl-beta-D-glucosaminyl)-L-arginyl-[protein] + UDP + H(+). In terms of biological role, protein-arginine N-acetylglucosaminyltransferase effector that disrupts TNF signaling in infected cells, including NF-kappa-B signaling and apoptosis. Acts by catalyzing the transfer of a single N-acetylglucosamine (GlcNAc) to a conserved arginine residue in the death domain of host proteins such as TRADD, TNFRSF1A/TNFR1 and TNFRSF10B/TRAILR2: arginine GlcNAcylation prevents homotypic/heterotypic death domain interactions and assembly of the oligomeric TNF-alpha receptor complex, thereby disrupting TNF signaling. Also acts on host proteins without a death domain: catalyzes arginine GlcNAcylation of host small Rab GTPase (Rab1, Rab5 and Rab11), thereby preventing GTPase activity and leading to impaired host vesicular protein transport. Also mediates auto-GlcNAcylation, which is required for activity toward death domain-containing host target proteins. This is Protein-arginine N-acetylglucosaminyltransferase SseK3 from Salmonella typhimurium (strain SL1344).